The chain runs to 156 residues: Small ribosomal subunit protein uS7 (156 aa).

It belongs to the universal ribosomal protein uS7 family. Part of the 30S ribosomal subunit. Contacts proteins S9 and S11.

Its function is as follows. One of the primary rRNA binding proteins, it binds directly to 16S rRNA where it nucleates assembly of the head domain of the 30S subunit. Is located at the subunit interface close to the decoding center, probably blocks exit of the E-site tRNA. The protein is Small ribosomal subunit protein uS7 of Thiomonas delicata (Thiomonas cuprina).